The sequence spans 424 residues: 3-phosphoshikimate 1-carboxyvinyltransferase (424 aa).

Lys-21, Ser-22, and Arg-26 together coordinate 3-phosphoshikimate. Lys-21 lines the phosphoenolpyruvate pocket. Positions 92 and 120 each coordinate phosphoenolpyruvate. Residues Ser-163, Ser-164, Gln-165, Ser-191, Asp-306, and Lys-333 each contribute to the 3-phosphoshikimate site. Position 165 (Gln-165) interacts with phosphoenolpyruvate. The active-site Proton acceptor is Asp-306. Phosphoenolpyruvate contacts are provided by Arg-337, Arg-379, and Lys-405.

Belongs to the EPSP synthase family. As to quaternary structure, monomer.

It is found in the cytoplasm. It carries out the reaction 3-phosphoshikimate + phosphoenolpyruvate = 5-O-(1-carboxyvinyl)-3-phosphoshikimate + phosphate. Its pathway is metabolic intermediate biosynthesis; chorismate biosynthesis; chorismate from D-erythrose 4-phosphate and phosphoenolpyruvate: step 6/7. Catalyzes the transfer of the enolpyruvyl moiety of phosphoenolpyruvate (PEP) to the 5-hydroxyl of shikimate-3-phosphate (S3P) to produce enolpyruvyl shikimate-3-phosphate and inorganic phosphate. The protein is 3-phosphoshikimate 1-carboxyvinyltransferase of Clostridium perfringens (strain ATCC 13124 / DSM 756 / JCM 1290 / NCIMB 6125 / NCTC 8237 / Type A).